The chain runs to 89 residues: MSLDTAEKQKLIETHQVHATDTGSVEVQVAMLSKRISKLSEHLQGNIHDFASRQGLLKMIGKRKRLLSYIKDKNVQKYQDLVKKIGIRG.

The protein belongs to the universal ribosomal protein uS15 family. In terms of assembly, part of the 30S ribosomal subunit. Forms a bridge to the 50S subunit in the 70S ribosome, contacting the 23S rRNA.

Functionally, one of the primary rRNA binding proteins, it binds directly to 16S rRNA where it helps nucleate assembly of the platform of the 30S subunit by binding and bridging several RNA helices of the 16S rRNA. Its function is as follows. Forms an intersubunit bridge (bridge B4) with the 23S rRNA of the 50S subunit in the ribosome. In Prochlorococcus marinus (strain MIT 9312), this protein is Small ribosomal subunit protein uS15.